Here is a 188-residue protein sequence, read N- to C-terminus: Large ribosomal subunit protein eL18A (188 aa).

The tract at residues Gly-153–Asn-188 is disordered. Residues Arg-178–Asn-188 are compositionally biased toward basic residues.

This sequence belongs to the eukaryotic ribosomal protein eL18 family. As to quaternary structure, component of the large ribosomal subunit.

It is found in the cytoplasm. Its function is as follows. Component of the large ribosomal subunit. The ribosome is a large ribonucleoprotein complex responsible for the synthesis of proteins in the cell. The sequence is that of Large ribosomal subunit protein eL18A (rpl18-a) from Xenopus laevis (African clawed frog).